A 295-amino-acid polypeptide reads, in one-letter code: Secreted frizzled-related protein 2 (295 aa).

An N-terminal signal peptide occupies residues 1 to 24; sequence MPRGPASLLLLVLASHCCLGSARG. Residues 35–155 enclose the FZ domain; that stretch reads YKRSNCKPIP…PQDNDLCIPL (121 aa). 8 disulfides stabilise this stretch: C40/C103, C50/C96, C87/C125, C114/C152, C118/C142, C172/C245, C175/C247, and C190/C295. One can recognise an NTR domain in the interval 172-295; that stretch reads CEACKTKNED…ISRSIRKLQC (124 aa).

The protein belongs to the secreted frizzled-related protein (sFRP) family. In terms of tissue distribution, highly expressed in the eye. Weaker expression in heart and lung.

It localises to the secreted. In terms of biological role, soluble frizzled-related proteins (sFRPS) function as modulators of Wnt signaling through direct interaction with Wnts. They have a role in regulating cell growth and differentiation in specific cell types. SFRP2 may be important for eye retinal development and for myogenesis. The chain is Secreted frizzled-related protein 2 from Mus musculus (Mouse).